Here is a 458-residue protein sequence, read N- to C-terminus: Argininosuccinate lyase (458 aa).

This sequence belongs to the lyase 1 family. Argininosuccinate lyase subfamily.

The protein localises to the cytoplasm. It catalyses the reaction 2-(N(omega)-L-arginino)succinate = fumarate + L-arginine. It participates in amino-acid biosynthesis; L-arginine biosynthesis; L-arginine from L-ornithine and carbamoyl phosphate: step 3/3. The sequence is that of Argininosuccinate lyase from Salmonella paratyphi A (strain ATCC 9150 / SARB42).